Here is an 88-residue protein sequence, read N- to C-terminus: Mitochondrial import inner membrane translocase subunit Tim10 (88 aa).

The Twin CX3C motif motif lies at Cys-25–Cys-49. Intrachain disulfides connect Cys-25-Cys-49 and Cys-29-Cys-45. Residues Lys-63 to Phe-88 form a disordered region. A compositionally biased stretch (low complexity) spans Gln-68–Ala-81.

The protein belongs to the small Tim family. In terms of assembly, heterohexamer; composed of 3 copies of timm9 and 3 copies of timm10, named soluble 70 kDa complex. Associates directly with the TIM22 complex, whose core is composed of timm22. Interacts with the transmembrane regions of multi-pass transmembrane proteins in transit.

It localises to the mitochondrion inner membrane. In terms of biological role, component of the TIM22 complex, a complex that mediates the import and insertion of multi-pass transmembrane proteins into the mitochondrial inner membrane. The TIM22 complex forms a twin-pore translocase that uses the membrane potential as external driving force. This chain is Mitochondrial import inner membrane translocase subunit Tim10 (timm10), found in Dictyostelium discoideum (Social amoeba).